A 148-amino-acid chain; its full sequence is Macrodomain Ter protein (148 aa).

It belongs to the MatP family. In terms of assembly, homodimer.

It is found in the cytoplasm. Required for spatial organization of the terminus region of the chromosome (Ter macrodomain) during the cell cycle. Prevents early segregation of duplicated Ter macrodomains during cell division. Binds specifically to matS, which is a 13 bp signature motif repeated within the Ter macrodomain. The sequence is that of Macrodomain Ter protein from Photobacterium profundum (strain SS9).